The following is a 123-amino-acid chain: MSHLTSAPGFEMSIFFEATHSNRQDSCMYLIEPLHLQGWKRGLSSVASPRQIRQVAPDGASSLKVAVSVSSFATLCSSSLNLETLTSESTSMTFTLLVSLIQLVVLLAKKTVFEISNKELFLT.

This is an uncharacterized protein from Saccharomyces cerevisiae (strain ATCC 204508 / S288c) (Baker's yeast).